The following is a 495-amino-acid chain: Glutamate--tRNA ligase (495 aa).

Residues 12–22 (PSPTGHLHIGN) carry the 'HIGH' region motif. The short motif at 259–263 (KLSKR) is the 'KMSKS' region element. K262 serves as a coordination point for ATP.

The protein belongs to the class-I aminoacyl-tRNA synthetase family. Glutamate--tRNA ligase type 1 subfamily. In terms of assembly, monomer.

Its subcellular location is the cytoplasm. It carries out the reaction tRNA(Glu) + L-glutamate + ATP = L-glutamyl-tRNA(Glu) + AMP + diphosphate. Catalyzes the attachment of glutamate to tRNA(Glu) in a two-step reaction: glutamate is first activated by ATP to form Glu-AMP and then transferred to the acceptor end of tRNA(Glu). The protein is Glutamate--tRNA ligase of Ligilactobacillus salivarius (strain UCC118) (Lactobacillus salivarius).